A 704-amino-acid chain; its full sequence is Polyribonucleotide nucleotidyltransferase (704 aa).

2 residues coordinate Mg(2+): D485 and D491. The 60-residue stretch at 552 to 611 folds into the KH domain; sequence PKILTMTINPDKIRDVIGPSGKMINKIIEDTGVKIDIEQDGTIYISSADTNMNNKAREII. An S1 motif domain is found at 621–689; it reads GQMYLGTVKR…NQGRVNLSRK (69 aa).

Belongs to the polyribonucleotide nucleotidyltransferase family. The cofactor is Mg(2+).

The protein resides in the cytoplasm. The enzyme catalyses RNA(n+1) + phosphate = RNA(n) + a ribonucleoside 5'-diphosphate. In terms of biological role, involved in mRNA degradation. Catalyzes the phosphorolysis of single-stranded polyribonucleotides processively in the 3'- to 5'-direction. This is Polyribonucleotide nucleotidyltransferase from Halalkalibacterium halodurans (strain ATCC BAA-125 / DSM 18197 / FERM 7344 / JCM 9153 / C-125) (Bacillus halodurans).